Reading from the N-terminus, the 43-residue chain is Hemolysin H1U (43 aa).

At Met-1 the chain carries N-formylmethionine.

It belongs to the staphylococcal hemolytic protein family.

It localises to the secreted. Virulence factor. Causes hemolysis of erythrocytes. Acts synergistically with beta-hemolysins from S.aureus ATCC 25923. Cytotoxic towards human dermal fibroblasts. This Staphylococcus ureilyticus (Staphylococcus cohnii subsp. urealyticus) protein is Hemolysin H1U.